The following is a 387-amino-acid chain: Protein WHAT'S THIS FACTOR 9, mitochondrial (387 aa).

Residues 1–24 (MLSIRRHAKTVASSCTNLTQKRTY) constitute a mitochondrion transit peptide. Residues 32 to 358 (KRDPYFDNIE…KKYIQLMKNS (327 aa)) enclose the PORR domain.

Its subcellular location is the mitochondrion. RNA-binding protein involved in group II intron splicing. Binds specific group II introns and promotes their splicing (e.g. rpl2 and ccmFC). The protein is Protein WHAT'S THIS FACTOR 9, mitochondrial of Arabidopsis thaliana (Mouse-ear cress).